The chain runs to 553 residues: Coiled-coil domain-containing protein 85A (553 aa).

A compositionally biased stretch (low complexity) spans 1 to 28 (MSKAAGGAAAAAAAAESCSPAPAGSSAA). Residues 1–37 (MSKAAGGAAAAAAAAESCSPAPAGSSAAPPAPVEDLS) form a disordered region. Coiled-coil stretches lie at residues 43–109 (ELLQ…RDLC) and 137–169 (MHKE…KELC). Disordered stretches follow at residues 203–414 (YVRD…GMNE), 433–461 (ENRM…GWGS), and 491–518 (SGAD…QPEP). Low complexity predominate over residues 209–220 (DGSSTSSTGSTD). Residues 236 to 260 (HLQKPRSEGSPEHSKHRSASPEHPQ) show a composition bias toward basic and acidic residues. A compositionally biased stretch (gly residues) spans 376 to 389 (GGSGGSGGSGGGSR). Over residues 391 to 403 (GTLRRQAQEDGSP) the composition is skewed to basic and acidic residues. Positions 412–443 (MNESTLSYVRQLEARVRQLEEENRMLPQASQN) form a coiled coil. Residues 439–455 (QASQNRRQPPTRNSSNM) show a composition bias toward polar residues. Positions 491 to 508 (SGADGSNSSPNSAASFSG) are enriched in low complexity. The residue at position 541 (arginine 541) is an Asymmetric dimethylarginine.

It belongs to the CCDC85 family. As to quaternary structure, may interact with ARVCF; CTNND1; CTNND2 and PKP4.

Its subcellular location is the cell junction. The protein resides in the adherens junction. Functionally, may play a role in cell-cell adhesion and epithelium development through its interaction with proteins of the beta-catenin family. The chain is Coiled-coil domain-containing protein 85A (CCDC85A) from Homo sapiens (Human).